The following is a 207-amino-acid chain: Fibroblast growth factor 18 (207 aa).

The first 27 residues, 1 to 27, serve as a signal peptide directing secretion; sequence MYSAPSACTCLCLHFLLLCFQVQVLAA. Residue N39 is glycosylated (N-linked (GlcNAc...) asparagine). The cysteines at positions 109 and 127 are disulfide-linked. Residue N137 is glycosylated (N-linked (GlcNAc...) asparagine). The segment at 157 to 183 is disordered; the sequence is GRPRKGPKTRENQQDVHFMKRYPKGQT. Basic and acidic residues predominate over residues 164–174; it reads KTRENQQDVHF.

Belongs to the heparin-binding growth factors family. In terms of assembly, interacts with FGFR3 and FGFR4. As to expression, mainly expressed in the lung. Not detected in brain, heart, liver, kidney and small intestine.

It localises to the secreted. Functionally, plays an important role in the regulation of cell proliferation, cell differentiation and cell migration. Required for normal ossification and bone development. Stimulates hepatic and intestinal proliferation. The sequence is that of Fibroblast growth factor 18 (Fgf18) from Rattus norvegicus (Rat).